Here is a 193-residue protein sequence, read N- to C-terminus: Xanthine phosphoribosyltransferase (193 aa).

2 residues coordinate xanthine: Leu-20 and Asn-27. 128-132 (ASGGT) contributes to the 5-phospho-alpha-D-ribose 1-diphosphate binding site. Position 156 (Lys-156) interacts with xanthine.

Belongs to the purine/pyrimidine phosphoribosyltransferase family. Xpt subfamily. As to quaternary structure, homodimer.

It localises to the cytoplasm. The catalysed reaction is XMP + diphosphate = xanthine + 5-phospho-alpha-D-ribose 1-diphosphate. It participates in purine metabolism; XMP biosynthesis via salvage pathway; XMP from xanthine: step 1/1. Converts the preformed base xanthine, a product of nucleic acid breakdown, to xanthosine 5'-monophosphate (XMP), so it can be reused for RNA or DNA synthesis. The polypeptide is Xanthine phosphoribosyltransferase (Deinococcus deserti (strain DSM 17065 / CIP 109153 / LMG 22923 / VCD115)).